Here is a 172-residue protein sequence, read N- to C-terminus: 3-hydroxydecanoyl-[acyl-carrier-protein] dehydratase (172 aa).

Residue His-71 is part of the active site.

It belongs to the thioester dehydratase family. FabA subfamily. Homodimer.

It is found in the cytoplasm. It catalyses the reaction a (3R)-hydroxyacyl-[ACP] = a (2E)-enoyl-[ACP] + H2O. It carries out the reaction (3R)-hydroxydecanoyl-[ACP] = (2E)-decenoyl-[ACP] + H2O. The catalysed reaction is (2E)-decenoyl-[ACP] = (3Z)-decenoyl-[ACP]. It functions in the pathway lipid metabolism; fatty acid biosynthesis. Its function is as follows. Necessary for the introduction of cis unsaturation into fatty acids. Catalyzes the dehydration of (3R)-3-hydroxydecanoyl-ACP to E-(2)-decenoyl-ACP and then its isomerization to Z-(3)-decenoyl-ACP. Can catalyze the dehydratase reaction for beta-hydroxyacyl-ACPs with saturated chain lengths up to 16:0, being most active on intermediate chain length. The sequence is that of 3-hydroxydecanoyl-[acyl-carrier-protein] dehydratase from Escherichia coli O6:K15:H31 (strain 536 / UPEC).